Consider the following 290-residue polypeptide: Eukaryotic translation initiation factor 3 subunit G (290 aa).

Basic and acidic residues predominate over residues 1–12; that stretch reads MADSKQSNRDWA. Disordered stretches follow at residues 1–30 and 173–192; these read MADSKQSNRDWAADDVDADELPPTTESTDA and AGETGGKYVPPSQRAGATGA. The 82-residue stretch at 204–285 folds into the RRM domain; sequence PTLRVTSLSI…LILEVAWSQP (82 aa).

Belongs to the eIF-3 subunit G family. In terms of assembly, component of the eukaryotic translation initiation factor 3 (eIF-3) complex.

It is found in the cytoplasm. RNA-binding component of the eukaryotic translation initiation factor 3 (eIF-3) complex, which is involved in protein synthesis of a specialized repertoire of mRNAs and, together with other initiation factors, stimulates binding of mRNA and methionyl-tRNAi to the 40S ribosome. The eIF-3 complex specifically targets and initiates translation of a subset of mRNAs involved in cell proliferation. This subunit can bind 18S rRNA. In Cryptococcus neoformans var. neoformans serotype D (strain B-3501A) (Filobasidiella neoformans), this protein is Eukaryotic translation initiation factor 3 subunit G.